The primary structure comprises 828 residues: MKLSRRSFMKANAVAAAAAAAGLSVPGVARAVVGQQEAIKWDKAPCRFCGTGCGVLVGTQQGRVVACQGDPDAPVNRGLNCIKGYFLPKIMYGKDRLTQPMLRMKDGSYHKDGEFTPVSWEQAFDVMEEKFKTSLKEKGPEAIGMFGSGQWTIWEGYAAAKLFKAGFRSNNIDPNARHCMASAVVGFMRTFGMDEPMGCYDDIEQADAFVLWGSNMAEMHPILWSRITNRRLSDPNVKVAVLSTFQHRSFELADNGIVFTPQSDLVILNYIANYIIQNNAVNQDFFTKHVNLRKGATDIGYGLRPTHPLEKAAKNPGSDASEPMSFDEYKAFVAEYTLDKTAEMTGVPKDQLEQLAQLYADPNKRVISYWTMGFNQHTRGVWANNLVYNLHLLTGKISQPGCGPFSLTGQPSACGTAREVGTFSHRLPADMVVTNEKHRDICEKHWQIPAGTIPAKVGLHAVAQDRALKDGKLNVYWVMCNNNMQAGPNINEDRMPGWRDPRNFIIVSDPYPTVSALSADLILPTAMWVEKEGAYGNAERRTQFWRQQIKAPGEAKSDLWQLVQFSRRFKTEEVWPEALLAQKPELRGKTLYDVLFATPAVSKFPLSELKEDQLNDESRELGFYLQKGLFEEYAWFGRGHGHDLAPFDDYHNARGLRWPVVEGKETQWRYSEGNDPYVKAGEGYKFYGKPDGKAVIFALPFEPAAESPDNEYDLWLSTGRVLEHWHTGSMTRRVLELHRAFPEAVVFIHPLDAKARDLRRGDKVKVSSRRGEVISIVETRGRNRPPQGLVYMPFFDAAQLVNNLTLDATDPLSKETDFKKCAVKLAKV.

The segment at residues 1 to 31 (MKLSRRSFMKANAVAAAAAAAGLSVPGVARA) is a signal peptide (tat-type signal). Residues 39-95 (IKWDKAPCRFCGTGCGVLVGTQQGRVVACQGDPDAPVNRGLNCIKGYFLPKIMYGKD) enclose the 4Fe-4S Mo/W bis-MGD-type domain. Positions 46, 49, 53, and 81 each coordinate [4Fe-4S] cluster. Mo-bis(molybdopterin guanine dinucleotide) is bound by residues lysine 83, glutamine 150, asparagine 175, cysteine 179, 212-219 (WGSNMAEM), 243-247 (STFQH), 262-264 (QSD), methionine 372, glutamine 376, asparagine 482, 508-509 (SD), lysine 531, aspartate 558, and 718-727 (TGRVLEHWHT). Residue phenylalanine 794 participates in substrate binding. 2 residues coordinate Mo-bis(molybdopterin guanine dinucleotide): asparagine 802 and lysine 819.

This sequence belongs to the prokaryotic molybdopterin-containing oxidoreductase family. NasA/NapA/NarB subfamily. As to quaternary structure, component of the periplasmic nitrate reductase NapAB complex composed of NapA and NapB. [4Fe-4S] cluster serves as cofactor. It depends on Mo-bis(molybdopterin guanine dinucleotide) as a cofactor. Post-translationally, predicted to be exported by the Tat system. The position of the signal peptide cleavage has not been experimentally proven.

The protein resides in the periplasm. The enzyme catalyses 2 Fe(II)-[cytochrome] + nitrate + 2 H(+) = 2 Fe(III)-[cytochrome] + nitrite + H2O. Catalytic subunit of the periplasmic nitrate reductase complex NapAB. Receives electrons from NapB and catalyzes the reduction of nitrate to nitrite. The chain is Periplasmic nitrate reductase from Salmonella paratyphi C (strain RKS4594).